The sequence spans 424 residues: Zinc finger protein 597 (424 aa).

Positions 14-88 (ILFEDLAVYF…KYPIAAPLVP (75 aa)) constitute a KRAB domain. C2H2-type zinc fingers lie at residues 156–178 (YKCPECDQNFSDHSYLVLHQKIH), 184–206 (HKCGDCGKIFNHRANLRTHRRIH), 212–234 (YKCAKCSASFRQHSHLSRHMNSH), and 240–262 (YTCSICGRGFMWLPGLAQHQKSH). A Glycyl lysine isopeptide (Lys-Gly) (interchain with G-Cter in SUMO2) cross-link involves residue K300. C2H2-type zinc fingers lie at residues 341 to 363 (LQCPDCDMTFPCFSELISHQNIH), 369 to 391 (HKCKTCEESFALDSELACHQKSH), and 397 to 419 (FKCTVCGKTFKSNLHLITHKRTH).

It belongs to the krueppel C2H2-type zinc-finger protein family.

The protein localises to the nucleus. Its function is as follows. May be involved in transcriptional regulation. The sequence is that of Zinc finger protein 597 (ZNF597) from Homo sapiens (Human).